We begin with the raw amino-acid sequence, 88 residues long: MAASHSLGEKILIKLIRFYQIVISPLIGPRCRFVPTCSCYGLEAIKTHGAVRGAWLTLKRILKCHPLNAGGYDPVPPKSDNHSKENKK.

Residues 67 to 88 (LNAGGYDPVPPKSDNHSKENKK) are disordered. The segment covering 79–88 (SDNHSKENKK) has biased composition (basic and acidic residues).

This sequence belongs to the UPF0161 family.

It is found in the cell inner membrane. Its function is as follows. Could be involved in insertion of integral membrane proteins into the membrane. This chain is Putative membrane protein insertion efficiency factor, found in Actinobacillus succinogenes (strain ATCC 55618 / DSM 22257 / CCUG 43843 / 130Z).